Reading from the N-terminus, the 310-residue chain is Ribosomal RNA small subunit methyltransferase H (310 aa).

S-adenosyl-L-methionine contacts are provided by residues 32-34 (AGH), aspartate 51, phenylalanine 78, aspartate 99, and glutamine 106.

This sequence belongs to the methyltransferase superfamily. RsmH family.

The protein localises to the cytoplasm. The catalysed reaction is cytidine(1402) in 16S rRNA + S-adenosyl-L-methionine = N(4)-methylcytidine(1402) in 16S rRNA + S-adenosyl-L-homocysteine + H(+). Functionally, specifically methylates the N4 position of cytidine in position 1402 (C1402) of 16S rRNA. This chain is Ribosomal RNA small subunit methyltransferase H, found in Macrococcus caseolyticus (strain JCSC5402) (Macrococcoides caseolyticum).